A 1493-amino-acid chain; its full sequence is Son of sevenless homolog (1493 aa).

Residues 244-448 form the DH domain; the sequence is TYESVAVDFL…ERVVGCVSDM (205 aa). The PH domain maps to 496 to 606; sequence ELEKDGDLGM…WMAVLVKVTT (111 aa). An N-terminal Ras-GEF domain is found at 656 to 824; the sequence is GIPVIKCGTV…TILALIEKRV (169 aa). One can recognise a Ras-GEF domain in the interval 897–1164; the sequence is HPIEIGRQLT…YNKSLEIQPK (268 aa). Disordered stretches follow at residues 1067–1091, 1165–1248, and 1263–1493; these read KSPP…DPEN, GLDT…DDAP, and HPKI…SSNK. Basic and acidic residues predominate over residues 1079–1088; that stretch reads QQKDDLKASD. 2 stretches are compositionally biased toward polar residues: residues 1208–1231 and 1279–1289; these read HSQN…NTPL and SRANQSNSVSL. The segment covering 1308–1326 has biased composition (low complexity); it reads STATSPTTLTTTTTPSSAG. Residues 1350–1361 are compositionally biased toward polar residues; the sequence is LTPSRDNSSPSA. A compositionally biased stretch (low complexity) spans 1381 to 1400; that stretch reads STSSDVSSSPSTSGSTSSAT. A compositionally biased stretch (basic and acidic residues) spans 1402–1417; that stretch reads ENQEQLRVIFDREESH. Over residues 1426–1435 the composition is skewed to pro residues; sequence PLPPALPPPR. Positions 1453–1464 are enriched in polar residues; it reads HNSNSPTLSSEQ.

As to quaternary structure, interacts with cmd-1 in the presence of Ca(2+).

Promotes the exchange of Ras-bound GDP by GTP. May regulate signaling pathways downstream of receptor tyrosine kinase, egl-15 and let-23. Required for larval and male spicule development, fluid homeostasis, vulva induction, spermatogenesis, and oogenesis by promoting meiosis prophase exit during oocyte maturation. Required for the delamination of G1 cell by promoting the loss of cell junctions and detachment from the excretory system during larval development. Plays a role in nicotinic acetylcholine receptor (nAChR)-mediated sensitivity to nicotine. Regulates synaptic levels of nAchR subunit lev-1 in the nerve cord. This is Son of sevenless homolog from Caenorhabditis elegans.